Consider the following 475-residue polypeptide: Legumain (475 aa).

A signal peptide spans 1-15 (MVMMLVMLSLHGTAA). Residues 16-35 (RLNRREWDSVIQLPTEPVDD) constitute a propeptide that is removed on maturation. H158 is a catalytic residue. C200 (nucleophile) is an active-site residue. C233 and C247 are joined by a disulfide. N300 carries N-linked (GlcNAc...) asparagine glycosylation. Cystine bridges form between C411-C441 and C423-C458.

This sequence belongs to the peptidase C13 family. Homodimer.

The catalysed reaction is Hydrolysis of proteins and small molecule substrates at -Asn-|-Xaa- bonds.. Its activity is regulated as follows. Repressed by various protease inhibitors including p-chloromercuribenzene sulfonic acid (PCMBS), N-ethylmaleimide, kininogen, elastatinal, cystatin EW and leupeptin. Its function is as follows. Asparaginyl endopeptidase able to cleave almost all peptide bonds on the carboxyl side of Asn residues, except at the NH2 terminus or second position or with N-glycosylated Asn. Responsible for the maturation (circular permutation) of concanavalin A from its precursor, by performing both cleavage and cleavage-coupled transpeptidation to form conA. This is Legumain from Canavalia ensiformis (Jack bean).